We begin with the raw amino-acid sequence, 275 residues long: Echotoxin-2 (275 aa).

The signal sequence occupies residues 1-23 (MKRNILALVVVVALISQSRPAES). Residues 23–32 (SAGGTIIATL) form a plays an important role in the hemolytic activity region. The segment at 49–67 (ETGASVASAAAAATSSDYS) is N-terminal region. Residues G123, S141, P143, Y176, and Y177 each contribute to the phosphocholine site. Positions 141–156 (SAPYNFDFYSNWLAVG) are trp-rich region, which is important for the binding to lipid membrane. A propeptide spanning residues 249 to 275 (RAIQQELARRAEEEKQRKRKALDEMLK) is cleaved from the precursor.

Belongs to the actinoporin family. Sea anemone subfamily. In terms of assembly, octamer or nonamer in membranes. Monomer in the soluble state. Salivary gland.

It localises to the secreted. It is found in the nematocyst. The protein localises to the target cell membrane. Pore-forming protein that forms cations-selective hydrophilic pores of around 1 nm and causes cardiac stimulation and cytolysis. Pore formation is a multi-step process that involves specific recognition of membrane sphingomyelin (but neither cholesterol nor phosphatidylcholine) using aromatic rich region and adjacent phosphocholine (POC) binding site, firm binding to the membrane (mainly driven by hydrophobic interactions) accompanied by the transfer of the N-terminal region to the lipid-water interface and finally pore formation after oligomerization of monomers. Exhibits both hemolytic and lethal activities. Gangliosides potently inhibits the hemolytic activity. The sequence is that of Echotoxin-2 from Monoplex parthenopeus (Giant triton).